The following is a 222-amino-acid chain: UPF0688 protein C1orf174 homolog (222 aa).

Disordered regions lie at residues 23–57 (STSLASAGDIASSTSAKTTCLASSSHKATDRRTSK) and 98–158 (EDGA…EPVP). Residues 33 to 48 (ASSTSAKTTCLASSSH) are compositionally biased toward polar residues. The segment covering 121 to 131 (VSEEPSVKAEE) has biased composition (basic and acidic residues). Residue Ser-172 is modified to Phosphoserine.

It belongs to the UPF0688 family.

The protein localises to the nucleus. The polypeptide is UPF0688 protein C1orf174 homolog (Rattus norvegicus (Rat)).